The primary structure comprises 190 residues: Holliday junction branch migration complex subunit RuvA (190 aa).

The segment at 1–63 (MIRKINATIE…EWNTSLYIFK (63 aa)) is domain I. A domain II region spans residues 64–138 (DKIERDVFES…NSFSAYSTGA (75 aa)). The interval 138–142 (ADTQS) is flexible linker. Positions 143–190 (YGNNNLKEAIEALETLGFQRYEIMKVIGQLDLEDLKTEEIIKECLTRL) are domain III.

It belongs to the RuvA family. In terms of assembly, homotetramer. Forms an RuvA(8)-RuvB(12)-Holliday junction (HJ) complex. HJ DNA is sandwiched between 2 RuvA tetramers; dsDNA enters through RuvA and exits via RuvB. An RuvB hexamer assembles on each DNA strand where it exits the tetramer. Each RuvB hexamer is contacted by two RuvA subunits (via domain III) on 2 adjacent RuvB subunits; this complex drives branch migration. In the full resolvosome a probable DNA-RuvA(4)-RuvB(12)-RuvC(2) complex forms which resolves the HJ.

Its subcellular location is the cytoplasm. Its function is as follows. The RuvA-RuvB-RuvC complex processes Holliday junction (HJ) DNA during genetic recombination and DNA repair, while the RuvA-RuvB complex plays an important role in the rescue of blocked DNA replication forks via replication fork reversal (RFR). RuvA specifically binds to HJ cruciform DNA, conferring on it an open structure. The RuvB hexamer acts as an ATP-dependent pump, pulling dsDNA into and through the RuvAB complex. HJ branch migration allows RuvC to scan DNA until it finds its consensus sequence, where it cleaves and resolves the cruciform DNA. This Petrotoga mobilis (strain DSM 10674 / SJ95) protein is Holliday junction branch migration complex subunit RuvA.